The following is a 306-amino-acid chain: Tyrosine recombinase XerC (306 aa).

Residues 1 to 85 enclose the Core-binding (CB) domain; that stretch reads MQQQLEQFLA…AIKSFFEYLQ (85 aa). In terms of domain architecture, Tyr recombinase spans 106–289; sequence FLPKAITVAQ…SNDRAVKYDQ (184 aa). Catalysis depends on residues Arg147, Lys171, His241, Arg244, and His267. Tyr276 serves as the catalytic O-(3'-phospho-DNA)-tyrosine intermediate.

The protein belongs to the 'phage' integrase family. XerC subfamily. In terms of assembly, forms a cyclic heterotetrameric complex composed of two molecules of XerC and two molecules of XerD.

It is found in the cytoplasm. Its function is as follows. Site-specific tyrosine recombinase, which acts by catalyzing the cutting and rejoining of the recombining DNA molecules. The XerC-XerD complex is essential to convert dimers of the bacterial chromosome into monomers to permit their segregation at cell division. It also contributes to the segregational stability of plasmids. In Herpetosiphon aurantiacus (strain ATCC 23779 / DSM 785 / 114-95), this protein is Tyrosine recombinase XerC.